A 330-amino-acid chain; its full sequence is Aspartate--ammonia ligase (330 aa).

Belongs to the class-II aminoacyl-tRNA synthetase family. AsnA subfamily.

The protein localises to the cytoplasm. It carries out the reaction L-aspartate + NH4(+) + ATP = L-asparagine + AMP + diphosphate + H(+). The protein operates within amino-acid biosynthesis; L-asparagine biosynthesis; L-asparagine from L-aspartate (ammonia route): step 1/1. The polypeptide is Aspartate--ammonia ligase (Histophilus somni (strain 2336) (Haemophilus somnus)).